Consider the following 66-residue polypeptide: Large ribosomal subunit protein uL29 (66 aa).

Belongs to the universal ribosomal protein uL29 family.

The protein is Large ribosomal subunit protein uL29 of Bacillus licheniformis (strain ATCC 14580 / DSM 13 / JCM 2505 / CCUG 7422 / NBRC 12200 / NCIMB 9375 / NCTC 10341 / NRRL NRS-1264 / Gibson 46).